The sequence spans 540 residues: PTS system alpha-glucoside-specific EIICB component (540 aa).

Residues M1–E420 form the PTS EIIC type-1 domain. 11 consecutive transmembrane segments (helical) span residues M12–L32, A87–M107, I130–V150, F174–W194, I201–F221, I225–V245, F277–F297, V307–L327, F329–M349, V352–P372, and S384–F404. The PTS EIIB type-1 domain maps to L448 to T530. The active-site Phosphocysteine intermediate; for EIIB activity is C470.

It is found in the cell membrane. Functionally, the phosphoenolpyruvate-dependent sugar phosphotransferase system (sugar PTS), a major carbohydrate active -transport system, catalyzes the phosphorylation of incoming sugar substrates concomitantly with their translocation across the cell membrane. This system is involved in alpha-glucoside transport. In terms of biological role, involved in the transport and simultaneous phosphorylation at O-6 of the glucosyl moiety of sucrose and its five linkage-isomeric alpha-D-glucosyl-D-fructoses. Can also transport maltose, isomaltose and maltitol, phosphorylating at O-6 of their non-reducing glucose portion. In Klebsiella pneumoniae, this protein is PTS system alpha-glucoside-specific EIICB component (aglA).